The primary structure comprises 156 residues: dCTP deaminase (156 aa).

DCTP contacts are provided by residues 79–84 (RSSLAR), Asp95, Gln124, and Tyr138.

Belongs to the dCTP deaminase family. In terms of assembly, homotrimer.

It carries out the reaction dCTP + H2O + H(+) = dUTP + NH4(+). It participates in pyrimidine metabolism; dUMP biosynthesis; dUMP from dCTP (dUTP route): step 1/2. In terms of biological role, catalyzes the deamination of dCTP to dUTP. This chain is dCTP deaminase, found in Pyrococcus furiosus (strain ATCC 43587 / DSM 3638 / JCM 8422 / Vc1).